The primary structure comprises 453 residues: Aspartate aminotransferase, chloroplastic (453 aa).

Residues 1–44 (MASLMLSLGSTSLLPREINKDKLKLGTSASNPFLKAKSFSRVTM) constitute a chloroplast transit peptide. L-aspartate is bound by residues glycine 85, tryptophan 181, and asparagine 234. Lysine 298 is modified (N6-(pyridoxal phosphate)lysine). L-aspartate is bound at residue arginine 427.

It belongs to the class-I pyridoxal-phosphate-dependent aminotransferase family. In terms of assembly, homodimer. Requires pyridoxal 5'-phosphate as cofactor.

It localises to the plastid. It is found in the chloroplast. The protein localises to the amyloplast. It catalyses the reaction L-aspartate + 2-oxoglutarate = oxaloacetate + L-glutamate. Functionally, amino acid aminotransferase important for the metabolism of amino acids and Krebs-cycle related organic acids. No activity with D-Asp or D-Ala as amino donors. In plants, it is involved in nitrogen metabolism and in aspects of carbon and energy metabolism. This is Aspartate aminotransferase, chloroplastic (ASP5) from Arabidopsis thaliana (Mouse-ear cress).